Here is a 69-residue protein sequence, read N- to C-terminus: DNA-directed RNA polymerase subunit epsilon (69 aa).

This sequence belongs to the RNA polymerase subunit epsilon family. In terms of assembly, RNAP is composed of a core of 2 alpha, a beta and a beta' subunit. The core is associated with a delta subunit, and at least one of epsilon or omega. When a sigma factor is associated with the core the holoenzyme is formed, which can initiate transcription.

It catalyses the reaction RNA(n) + a ribonucleoside 5'-triphosphate = RNA(n+1) + diphosphate. A non-essential component of RNA polymerase (RNAP). In Shouchella clausii (strain KSM-K16) (Alkalihalobacillus clausii), this protein is DNA-directed RNA polymerase subunit epsilon.